A 614-amino-acid polypeptide reads, in one-letter code: Fimbrin (614 aa).

2 EF-hand domains span residues 16 to 50 (EEILTLTDQFNKLDVDGKGYLDQPTTIKAFEDSKK) and 51 to 86 (GSYDEVREAIREVNVDSSGRVEPEDFVGIFNVLKKG). Ca(2+) contacts are provided by Asp-29, Asp-31, Tyr-35, Thr-40, Asp-66, Ser-68, Arg-70, and Asp-75. Actin-binding regions lie at residues 98–368 (TIKG…GLEP) and 369–614 (LNEE…LMAV). Calponin-homology (CH) domains follow at residues 112 to 233 (EEER…RRGL), 261 to 364 (LPPE…NTHP), 385 to 495 (EREA…RMNI), and 508 to 614 (TLSD…LMAV).

Its subcellular location is the cytoplasm. The protein resides in the cytoskeleton. It localises to the actin patch. Functionally, binds to actin, and functionally associates with actin structures involved in the development and maintenance of cell polarity. Plays a role in cytokinesis. Plays important roles in mating and in spore formation. The polypeptide is Fimbrin (fim1) (Schizosaccharomyces pombe (strain 972 / ATCC 24843) (Fission yeast)).